We begin with the raw amino-acid sequence, 232 residues long: Enolase-phosphatase E1 (232 aa).

It belongs to the HAD-like hydrolase superfamily. MasA/MtnC family. Monomer. Mg(2+) serves as cofactor.

The enzyme catalyses 5-methylsulfanyl-2,3-dioxopentyl phosphate + H2O = 1,2-dihydroxy-5-(methylsulfanyl)pent-1-en-3-one + phosphate. The protein operates within amino-acid biosynthesis; L-methionine biosynthesis via salvage pathway; L-methionine from S-methyl-5-thio-alpha-D-ribose 1-phosphate: step 3/6. It functions in the pathway amino-acid biosynthesis; L-methionine biosynthesis via salvage pathway; L-methionine from S-methyl-5-thio-alpha-D-ribose 1-phosphate: step 4/6. Functionally, bifunctional enzyme that catalyzes the enolization of 2,3-diketo-5-methylthiopentyl-1-phosphate (DK-MTP-1-P) into the intermediate 2-hydroxy-3-keto-5-methylthiopentenyl-1-phosphate (HK-MTPenyl-1-P), which is then dephosphorylated to form the acireductone 1,2-dihydroxy-3-keto-5-methylthiopentene (DHK-MTPene). The polypeptide is Enolase-phosphatase E1 (Nocardia farcinica (strain IFM 10152)).